The primary structure comprises 308 residues: Ecto-ADP-ribosyltransferase 5 (308 aa).

An N-terminal signal peptide occupies residues 1 to 23 (MILEDLLMVLSCLALHILWKVQA). Cys-43 and Cys-259 are joined by a disulfide. The TR mART core domain maps to 63 to 253 (ALLRESWEAA…IVTLWSYNQT (191 aa)). Residue Tyr-100 coordinates NAD(+). Asn-102 carries an N-linked (GlcNAc...) asparagine glycan. 2 residues coordinate NAD(+): Arg-161 and Gln-181. The active site involves Arg-161. Ser-184 is a catalytic residue. Asn-197 carries N-linked (GlcNAc...) asparagine glycosylation. Ser-215 is an NAD(+) binding site. Residue Glu-222 is part of the active site. An N-linked (GlcNAc...) asparagine glycan is attached at Asn-251.

It belongs to the Arg-specific ADP-ribosyltransferase family.

It localises to the secreted. It is found in the membrane. It carries out the reaction L-arginyl-[protein] + NAD(+) = N(omega)-(ADP-D-ribosyl)-L-arginyl-[protein] + nicotinamide + H(+). The protein is Ecto-ADP-ribosyltransferase 5 (Art5) of Rattus norvegicus (Rat).